Here is a 156-residue protein sequence, read N- to C-terminus: 6,7-dimethyl-8-ribityllumazine synthase (156 aa).

5-amino-6-(D-ribitylamino)uracil contacts are provided by residues F23, 57-59 (AFE), and 81-83 (AVI). 86–87 (AT) is a binding site for (2S)-2-hydroxy-3-oxobutyl phosphate. H89 (proton donor) is an active-site residue. N114 lines the 5-amino-6-(D-ribitylamino)uracil pocket. R128 lines the (2S)-2-hydroxy-3-oxobutyl phosphate pocket.

This sequence belongs to the DMRL synthase family.

The enzyme catalyses (2S)-2-hydroxy-3-oxobutyl phosphate + 5-amino-6-(D-ribitylamino)uracil = 6,7-dimethyl-8-(1-D-ribityl)lumazine + phosphate + 2 H2O + H(+). Its pathway is cofactor biosynthesis; riboflavin biosynthesis; riboflavin from 2-hydroxy-3-oxobutyl phosphate and 5-amino-6-(D-ribitylamino)uracil: step 1/2. Functionally, catalyzes the formation of 6,7-dimethyl-8-ribityllumazine by condensation of 5-amino-6-(D-ribitylamino)uracil with 3,4-dihydroxy-2-butanone 4-phosphate. This is the penultimate step in the biosynthesis of riboflavin. The sequence is that of 6,7-dimethyl-8-ribityllumazine synthase from Aliarcobacter butzleri (strain RM4018) (Arcobacter butzleri).